The following is a 325-amino-acid chain: Acetyl-coenzyme A carboxylase carboxyl transferase subunit alpha (325 aa).

Positions 35-292 constitute a CoA carboxyltransferase C-terminal domain; it reads EINKLEARLE…DDVLKRSLRE (258 aa).

The protein belongs to the AccA family. Acetyl-CoA carboxylase is a heterohexamer composed of biotin carboxyl carrier protein (AccB), biotin carboxylase (AccC) and two subunits each of ACCase subunit alpha (AccA) and ACCase subunit beta (AccD).

The protein resides in the cytoplasm. It carries out the reaction N(6)-carboxybiotinyl-L-lysyl-[protein] + acetyl-CoA = N(6)-biotinyl-L-lysyl-[protein] + malonyl-CoA. It functions in the pathway lipid metabolism; malonyl-CoA biosynthesis; malonyl-CoA from acetyl-CoA: step 1/1. Component of the acetyl coenzyme A carboxylase (ACC) complex. First, biotin carboxylase catalyzes the carboxylation of biotin on its carrier protein (BCCP) and then the CO(2) group is transferred by the carboxyltransferase to acetyl-CoA to form malonyl-CoA. The polypeptide is Acetyl-coenzyme A carboxylase carboxyl transferase subunit alpha (Anoxybacillus flavithermus (strain DSM 21510 / WK1)).